Reading from the N-terminus, the 233-residue chain is Large ribosomal subunit protein uL1 (233 aa).

This sequence belongs to the universal ribosomal protein uL1 family. Part of the 50S ribosomal subunit.

In terms of biological role, binds directly to 23S rRNA. The L1 stalk is quite mobile in the ribosome, and is involved in E site tRNA release. Its function is as follows. Protein L1 is also a translational repressor protein, it controls the translation of the L11 operon by binding to its mRNA. The sequence is that of Large ribosomal subunit protein uL1 from Shewanella putrefaciens (strain CN-32 / ATCC BAA-453).